Here is a 328-residue protein sequence, read N- to C-terminus: Phosphate acyltransferase (328 aa).

The protein belongs to the PlsX family. As to quaternary structure, homodimer. Probably interacts with PlsY.

The protein localises to the cytoplasm. It catalyses the reaction a fatty acyl-[ACP] + phosphate = an acyl phosphate + holo-[ACP]. Its pathway is lipid metabolism; phospholipid metabolism. Its function is as follows. Catalyzes the reversible formation of acyl-phosphate (acyl-PO(4)) from acyl-[acyl-carrier-protein] (acyl-ACP). This enzyme utilizes acyl-ACP as fatty acyl donor, but not acyl-CoA. The chain is Phosphate acyltransferase from Campylobacter jejuni subsp. jejuni serotype O:6 (strain 81116 / NCTC 11828).